Here is a 608-residue protein sequence, read N- to C-terminus: Ceramide kinase (608 aa).

One can recognise a DAGKc domain in the interval 160 to 367 (ERPRNLLVFV…LDAMQVVRWK (208 aa)). ATP is bound by residues 170–174 (HPKSG), T201, and 230–236 (GDGFFNE). 229–232 (GGDG) is a binding site for substrate. The active-site Proton donor/acceptor is D231. The tract at residues 254–280 (PSDSFNSVQSRGSSSVPEPGDEVHETD) is disordered. The span at 255–269 (SDSFNSVQSRGSSSV) shows a compositional bias: polar residues. S329 contributes to the ATP binding site.

Requires Ca(2+) as cofactor.

It catalyses the reaction an N-acylsphing-4-enine + ATP = an N-acylsphing-4-enine 1-phosphate + ADP + H(+). Functionally, catalyzes specifically the phosphorylation of ceramide to form ceramide 1-phosphate. Possesses high activity on ceramide analogs (C6, C8 synthetic ceramides) and lower activity on C6 and C8 dihydroceramides. Has weak activity on natural ceramides (a mixture of ceramides from bovine brain) and the synthetic substrate C2 ceramide. Has very poor activity on diacylglycerol and sphingosine. Ceramide is a critical sphingolipid metabolite that induces programmed cell death (PCD) in plants and ceramide-1-phosphate has a PCD suppressive effect. Thus, ceramide phosphorylation plays a role in the modulation of PCD and CERK activity is crucial for the maintenance of cell viability. The sequence is that of Ceramide kinase (CERK) from Arabidopsis thaliana (Mouse-ear cress).